The sequence spans 185 residues: Anaphase-promoting complex subunit 10 (185 aa).

An N-acetylthreonine modification is found at T2. A DOC domain is found at 2–185 (TTPNKTPPGA…IDFMMYRSIR (184 aa)). K169 carries the post-translational modification N6-acetyllysine.

Belongs to the APC10 family. The mammalian APC/C is composed at least of 14 distinct subunits ANAPC1, ANAPC2, CDC27/APC3, ANAPC4, ANAPC5, CDC16/APC6, ANAPC7, CDC23/APC8, ANAPC10, ANAPC11, CDC26/APC12, ANAPC13, ANAPC15 and ANAPC16 that assemble into a complex of at least 19 chains with a combined molecular mass of around 1.2 MDa; APC/C interacts with FZR1 and FBXO5. The C-terminus of APC10 binds to CDC27/APC3. Interacts with PIWIL1; interaction only takes place when PIWIL1 binds piRNA. Interacts with FBXO43; the interaction is direct.

It functions in the pathway protein modification; protein ubiquitination. Component of the anaphase promoting complex/cyclosome (APC/C), a cell cycle-regulated E3 ubiquitin ligase that controls progression through mitosis and the G1 phase of the cell cycle. The APC/C complex acts by mediating ubiquitination and subsequent degradation of target proteins: it mainly mediates the formation of 'Lys-11'-linked polyubiquitin chains and, to a lower extent, the formation of 'Lys-48'- and 'Lys-63'-linked polyubiquitin chains. The APC/C complex catalyzes assembly of branched 'Lys-11'-/'Lys-48'-linked branched ubiquitin chains on target proteins. In Mus musculus (Mouse), this protein is Anaphase-promoting complex subunit 10 (Anapc10).